We begin with the raw amino-acid sequence, 476 residues long: PRAME family member 5 (476 aa).

The stretch at 97–124 (RWKLQVLDLQDVCENFWMVWSEAMAHGC) is one LRR 1; degenerate repeat. One copy of the LRR 2; degenerate repeat lies at 179 to 203 (HLCCKKLKILGMPFRNIRSILKMVN). One copy of the LRR 3; degenerate repeat lies at 204-230 (LDCIQEVEVNCKWVLPILTQFTPYLGH). The stretch at 231-266 (MRNLQKLVLSHMDVSRYVSPEQKKEIVTQFTTQFLK) is one LRR 4; degenerate repeat. LRR repeat units follow at residues 267–292 (LCCL…LSCL), 293–324 (KTSL…SQLK), 325–345 (TLDL…QILL), 349–376 (AATL…ALSR), and 377–401 (CFEL…LLSH).

It belongs to the PRAME family.

This Homo sapiens (Human) protein is PRAME family member 5.